The primary structure comprises 239 residues: tRNA (guanine-N(1)-)-methyltransferase (239 aa).

S-adenosyl-L-methionine contacts are provided by residues glycine 110 and 130–135 (IGDYVL).

Belongs to the RNA methyltransferase TrmD family. Homodimer.

It localises to the cytoplasm. The catalysed reaction is guanosine(37) in tRNA + S-adenosyl-L-methionine = N(1)-methylguanosine(37) in tRNA + S-adenosyl-L-homocysteine + H(+). Its function is as follows. Specifically methylates guanosine-37 in various tRNAs. The chain is tRNA (guanine-N(1)-)-methyltransferase from Borrelia garinii subsp. bavariensis (strain ATCC BAA-2496 / DSM 23469 / PBi) (Borreliella bavariensis).